Reading from the N-terminus, the 213-residue chain is High frequency lysogenization protein HflD homolog (213 aa).

A coiled-coil region spans residues glutamine 79 to histidine 122.

The protein belongs to the HflD family.

The protein resides in the cytoplasm. The protein localises to the cell inner membrane. This chain is High frequency lysogenization protein HflD homolog, found in Salmonella agona (strain SL483).